A 509-amino-acid chain; its full sequence is Photosystem II CP47 reaction center protein (509 aa).

A run of 6 helical transmembrane segments spans residues 21–36 (AVHL…WAGS), 101–115 (IVLS…IWHW), 140–156 (GIHL…FGAF), 203–218 (IAAG…FHLT), 237–252 (VLSS…AFVT), and 457–472 (NFAL…HGSR).

Belongs to the PsbB/PsbC family. PsbB subfamily. As to quaternary structure, PSII is composed of 1 copy each of membrane proteins PsbA, PsbB, PsbC, PsbD, PsbE, PsbF, PsbH, PsbI, PsbJ, PsbK, PsbL, PsbM, PsbT, PsbX, PsbY, PsbZ, Psb30/Ycf12, at least 3 peripheral proteins of the oxygen-evolving complex and a large number of cofactors. It forms dimeric complexes. The cofactor is Binds multiple chlorophylls. PSII binds additional chlorophylls, carotenoids and specific lipids..

The protein localises to the plastid. It is found in the chloroplast thylakoid membrane. In terms of biological role, one of the components of the core complex of photosystem II (PSII). It binds chlorophyll and helps catalyze the primary light-induced photochemical processes of PSII. PSII is a light-driven water:plastoquinone oxidoreductase, using light energy to abstract electrons from H(2)O, generating O(2) and a proton gradient subsequently used for ATP formation. In Pyropia yezoensis (Susabi-nori), this protein is Photosystem II CP47 reaction center protein.